A 318-amino-acid polypeptide reads, in one-letter code: 1-aminocyclopropane-1-carboxylate oxidase 1 (318 aa).

One can recognise a Fe2OG dioxygenase domain in the interval 153–254; sequence PTFGTKVSNY…RMSIASFYNP (102 aa). Fe cation-binding residues include His177, Asp179, and His234.

This sequence belongs to the iron/ascorbate-dependent oxidoreductase family. Fe cation is required as a cofactor. In terms of tissue distribution, fruit.

It catalyses the reaction 1-aminocyclopropane-1-carboxylate + L-ascorbate + O2 = ethene + L-dehydroascorbate + hydrogen cyanide + CO2 + 2 H2O. It participates in alkene biosynthesis; ethylene biosynthesis via S-adenosyl-L-methionine; ethylene from S-adenosyl-L-methionine: step 2/2. The protein is 1-aminocyclopropane-1-carboxylate oxidase 1 (ACO1) of Cucumis melo (Muskmelon).